Consider the following 106-residue polypeptide: MQLTTTPGIDGKRITRYCGVVAGEAVLGANIFKDLFAGIRDLVGGRSGTYEKELQRARDIALEELQQRAHDLGANAVVGIDIDYEVLGKENGMLMVSASGTAVIVE.

The protein belongs to the UPF0145 family.

The sequence is that of UPF0145 protein Nmul_A0734 from Nitrosospira multiformis (strain ATCC 25196 / NCIMB 11849 / C 71).